Here is a 208-residue protein sequence, read N- to C-terminus: Small ribosomal subunit protein uS4 (208 aa).

The S4 RNA-binding domain maps to 98–158 (RRLDNVVYRL…EKSRKIACIN (61 aa)).

The protein belongs to the universal ribosomal protein uS4 family. In terms of assembly, part of the 30S ribosomal subunit. Contacts protein S5. The interaction surface between S4 and S5 is involved in control of translational fidelity.

In terms of biological role, one of the primary rRNA binding proteins, it binds directly to 16S rRNA where it nucleates assembly of the body of the 30S subunit. With S5 and S12 plays an important role in translational accuracy. The polypeptide is Small ribosomal subunit protein uS4 (Geobacter sulfurreducens (strain ATCC 51573 / DSM 12127 / PCA)).